Here is a 710-residue protein sequence, read N- to C-terminus: Polyribonucleotide nucleotidyltransferase (710 aa).

Mg(2+) contacts are provided by aspartate 491 and aspartate 497. The region spanning 559 to 618 is the KH domain; the sequence is PRLITIKINPEKIRDVIGKGGAVIRALTEETGTQIDISDEGVVTIASVDAAAGQEAKRRI. The region spanning 628-696 is the S1 motif domain; it reads GKVYEGTVLK…DRGRLKLSMK (69 aa).

Belongs to the polyribonucleotide nucleotidyltransferase family. Mg(2+) serves as cofactor.

Its subcellular location is the cytoplasm. It catalyses the reaction RNA(n+1) + phosphate = RNA(n) + a ribonucleoside 5'-diphosphate. Functionally, involved in mRNA degradation. Catalyzes the phosphorolysis of single-stranded polyribonucleotides processively in the 3'- to 5'-direction. The chain is Polyribonucleotide nucleotidyltransferase from Herminiimonas arsenicoxydans.